Reading from the N-terminus, the 120-residue chain is Photosystem II extrinsic protein U (120 aa).

An N-terminal signal peptide occupies residues 1 to 29; that stretch reads MKRLLSLLTGVLVMTGLLMALIFPQSAYA.

It belongs to the PsbU family. PSII is composed of 1 copy each of membrane proteins PsbA, PsbB, PsbC, PsbD, PsbE, PsbF, PsbH, PsbI, PsbJ, PsbK, PsbL, PsbM, PsbT, PsbX, PsbY, Psb30/Ycf12, peripheral proteins PsbO, CyanoQ (PsbQ), PsbU, PsbV and a large number of cofactors. It forms dimeric complexes.

It localises to the cellular thylakoid membrane. Its function is as follows. One of the extrinsic, lumenal subunits of photosystem II (PSII). PSII is a light-driven water plastoquinone oxidoreductase, using light energy to abstract electrons from H(2)O, generating a proton gradient subsequently used for ATP formation. The extrinsic proteins stabilize the structure of photosystem II oxygen-evolving complex (OEC), the ion environment of oxygen evolution and protect the OEC against heat-induced inactivation. This is Photosystem II extrinsic protein U from Prochlorococcus marinus (strain MIT 9313).